Reading from the N-terminus, the 2485-residue chain is Probable polyketide synthase 10 (2485 aa).

Residues 8 to 447 (EDDIAIIGVG…GANCCIILSE (440 aa)) form the Ketosynthase family 3 (KS3) domain. Active-site for beta-ketoacyl synthase activity residues include C184, H325, and H363. The acyl/malonyl transferase stretch occupies residues 636 to 669 (GIEASFIVGHSLGEISAAHCSGMIDLETLCYIIY). The active-site For acyl/malonyl transferase activity is S646. The segment at 930–1054 (PPITILGNES…GNFHISNNLF (125 aa)) is N-terminal hotdog fold. A PKS/mFAS DH domain is found at 930–1220 (PPITILGNES…SKSLTPIQDP (291 aa)). H964 (proton acceptor; for dehydratase activity) is an active-site residue. Positions 1071-1220 (NYSLIERDDL…SKSLTPIQDP (150 aa)) are C-terminal hotdog fold. The active-site Proton donor; for dehydratase activity is the D1134. One can recognise a Carrier domain in the interval 2410 to 2485 (ESNKGIDGLL…NQLIKFLNKK (76 aa)). S2447 bears the O-(pantetheine 4'-phosphoryl)serine mark.

The cofactor is pantetheine 4'-phosphate.

Functionally, probable polyketide synthase. This chain is Probable polyketide synthase 10 (pks10), found in Dictyostelium discoideum (Social amoeba).